Reading from the N-terminus, the 351-residue chain is Flap endonuclease 1 (351 aa).

The segment at 1-98 (MDLAELVEEI…QELERRKKVK (98 aa)) is N-domain. D27, D80, E154, E156, D175, D177, and D238 together coordinate Mg(2+). The interval 118–260 (ELKKYAQMSI…TAYRIIKKYG (143 aa)) is I-domain. The interaction with PCNA stretch occupies residues 343–351 (RQTGLDQWF).

The protein belongs to the XPG/RAD2 endonuclease family. FEN1 subfamily. In terms of assembly, interacts with PCNA. PCNA stimulates the nuclease activity without altering cleavage specificity. Mg(2+) is required as a cofactor.

Structure-specific nuclease with 5'-flap endonuclease and 5'-3' exonuclease activities involved in DNA replication and repair. During DNA replication, cleaves the 5'-overhanging flap structure that is generated by displacement synthesis when DNA polymerase encounters the 5'-end of a downstream Okazaki fragment. Binds the unpaired 3'-DNA end and kinks the DNA to facilitate 5' cleavage specificity. Cleaves one nucleotide into the double-stranded DNA from the junction in flap DNA, leaving a nick for ligation. Also involved in the base excision repair (BER) pathway. Acts as a genome stabilization factor that prevents flaps from equilibrating into structures that lead to duplications and deletions. Also possesses 5'-3' exonuclease activity on nicked or gapped double-stranded DNA. The chain is Flap endonuclease 1 from Sulfurisphaera tokodaii (strain DSM 16993 / JCM 10545 / NBRC 100140 / 7) (Sulfolobus tokodaii).